The primary structure comprises 443 residues: Endoplasmic reticulum protein SC65 (443 aa).

An N-terminal signal peptide occupies residues 1–18; that stretch reads MARAAWGLLWLLLGSAGA. Residues 81 to 102 are disordered; that stretch reads SGPATSQPRPAPGPDGDNEGDG. N-linked (GlcNAc...) asparagine glycosylation occurs at asparagine 367. Acidic residues-rich tracts occupy residues 387 to 398, 407 to 419, and 431 to 443; these read DEMELEETESLP, AEFE…EEGL, and GDED…PELA. The interval 387–443 is disordered; the sequence is DEMELEETESLPEPEKPLSDAEFEGEGDYEEGLYADWWQEPDAKGDEDEAEPEPELA.

This sequence belongs to the leprecan family. Interacts with PLOD1, P3H3 and PPIB. Identified in a complex with PLOD1 and P3H3. In terms of tissue distribution, found in testis, brain, heart and at a much lower level in liver.

It localises to the endoplasmic reticulum. In terms of biological role, part of a complex composed of PLOD1, P3H3 and P3H4 that catalyzes hydroxylation of lysine residues in collagen alpha chains and is required for normal assembly and cross-linking of collagen fibrils. Required for normal bone density and normal skin stability via its role in hydroxylation of lysine residues in collagen alpha chains and in collagen fibril assembly. This is Endoplasmic reticulum protein SC65 from Rattus norvegicus (Rat).